Reading from the N-terminus, the 73-residue chain is Large ribosomal subunit protein bL28 (73 aa).

Belongs to the bacterial ribosomal protein bL28 family.

The chain is Large ribosomal subunit protein bL28 from Fervidobacterium nodosum (strain ATCC 35602 / DSM 5306 / Rt17-B1).